The chain runs to 157 residues: Mannose-specific lectin (157 aa).

Residues 1 to 19 (MAKASLLILAAIFLGVITP) constitute a signal peptide (or 23; in 70% of the molecules). Positions 24-132 (DNILYSGETL…DRWATGTHTG (109 aa)) constitute a Bulb-type lectin domain. Gln-49, Asp-51, Asn-53, Tyr-57, Asp-60, Lys-61, Trp-64, Ala-65, Asn-67, Gln-80, Asp-82, Asn-84, Tyr-88, Ile-95, Trp-96, Asn-99, Asn-106, Gln-112, Asp-114, Asn-116, Tyr-120, and Trp-125 together coordinate alpha-D-mannopyranose. Cys-52 and Cys-75 are disulfide-bonded. The propeptide at 129-157 (THTGLVGIPASPPSEKYPTAGKIKLVTAK) is removed in mature form.

Homotetramer.

It localises to the secreted. Functionally, mannose-specific lectin which binds alpha-D-linked mannose. Displays a high affinity for alpha-(1-3)-mannose oligomers. Displays antiviral activity and therefore may contribute to defense against infections. The sequence is that of Mannose-specific lectin from Galanthus nivalis (Common snowdrop).